Here is a 328-residue protein sequence, read N- to C-terminus: Aryl-hydrocarbon-interacting protein-like 1 (328 aa).

In terms of domain architecture, PPIase FKBP-type spans 53-145; sequence KQVGQPMSII…DLDELQKEPQ (93 aa). TPR repeat units follow at residues 178–211, 230–263, and 264–297; these read VPLL…LRNL, NTLI…HPGI, and VKAY…EPSM.

As to quaternary structure, interacts with NUB1.

Its subcellular location is the cytoplasm. It is found in the nucleus. May be important in protein trafficking and/or protein folding and stabilization. The sequence is that of Aryl-hydrocarbon-interacting protein-like 1 (Aipl1) from Mus musculus (Mouse).